Here is a 290-residue protein sequence, read N- to C-terminus: S-methyl-5'-thioadenosine phosphorylase (290 aa).

Phosphate is bound by residues serine 11, 53–54 (RH), and 86–87 (SA). A substrate-binding site is contributed by methionine 184. A phosphate-binding site is contributed by threonine 185. 208-210 (DYD) lines the substrate pocket.

The protein belongs to the PNP/MTAP phosphorylase family. MTAP subfamily. In terms of assembly, homohexamer. Dimer of a homotrimer.

It catalyses the reaction S-methyl-5'-thioadenosine + phosphate = 5-(methylsulfanyl)-alpha-D-ribose 1-phosphate + adenine. It participates in amino-acid biosynthesis; L-methionine biosynthesis via salvage pathway; S-methyl-5-thio-alpha-D-ribose 1-phosphate from S-methyl-5'-thioadenosine (phosphorylase route): step 1/1. In terms of biological role, catalyzes the reversible phosphorylation of S-methyl-5'-thioadenosine (MTA) to adenine and 5-methylthioribose-1-phosphate. Involved in the breakdown of MTA, a major by-product of polyamine biosynthesis. Responsible for the first step in the methionine salvage pathway after MTA has been generated from S-adenosylmethionine. Has broad substrate specificity with 6-aminopurine nucleosides as preferred substrates. This is S-methyl-5'-thioadenosine phosphorylase from Cereibacter sphaeroides (strain ATCC 17023 / DSM 158 / JCM 6121 / CCUG 31486 / LMG 2827 / NBRC 12203 / NCIMB 8253 / ATH 2.4.1.) (Rhodobacter sphaeroides).